Reading from the N-terminus, the 549-residue chain is Cation/acetate symporter ActP (549 aa).

A run of 13 helical transmembrane segments spans residues 33-53 (WQAI…TYWA), 77-97 (LAIA…ALVF), 103-123 (GLIY…LIAE), 148-168 (ILSA…QMVG), 183-203 (IAVV…GMLA), 206-226 (WVQI…AFMV), 262-282 (ISAL…PHIL), 303-323 (GFMG…IMLV), 355-375 (LFLG…VAGL), 404-424 (VSKI…VLFE), 428-448 (IAFM…PIIL), 464-484 (GGWL…TIWV), and 493-513 (IFPY…GIWF).

It belongs to the sodium:solute symporter (SSF) (TC 2.A.21) family.

It is found in the cell inner membrane. Transports acetate. The sequence is that of Cation/acetate symporter ActP from Escherichia coli O17:K52:H18 (strain UMN026 / ExPEC).